Consider the following 228-residue polypeptide: 3-dehydroquinate dehydratase (228 aa).

3-dehydroquinate-binding positions include Ser26, 51–53, and Arg84; that span reads EIR. His127 functions as the Proton donor/acceptor in the catalytic mechanism. The active-site Schiff-base intermediate with substrate is Lys150. 3-dehydroquinate contacts are provided by Arg190, Thr209, and Gln213.

The protein belongs to the type-I 3-dehydroquinase family. As to quaternary structure, homodimer.

It catalyses the reaction 3-dehydroquinate = 3-dehydroshikimate + H2O. It functions in the pathway metabolic intermediate biosynthesis; chorismate biosynthesis; chorismate from D-erythrose 4-phosphate and phosphoenolpyruvate: step 3/7. Functionally, involved in the third step of the chorismate pathway, which leads to the biosynthesis of aromatic amino acids. Catalyzes the cis-dehydration of 3-dehydroquinate (DHQ) and introduces the first double bond of the aromatic ring to yield 3-dehydroshikimate. The polypeptide is 3-dehydroquinate dehydratase (Thermoplasma acidophilum (strain ATCC 25905 / DSM 1728 / JCM 9062 / NBRC 15155 / AMRC-C165)).